The sequence spans 451 residues: UPF0210 protein NMB1652 (451 aa).

The protein belongs to the UPF0210 family. As to quaternary structure, homodimer.

This Neisseria meningitidis serogroup B (strain ATCC BAA-335 / MC58) protein is UPF0210 protein NMB1652.